Here is a 482-residue protein sequence, read N- to C-terminus: Glutamate--tRNA ligase (482 aa).

The 'HIGH' region motif lies at 9 to 19; sequence PSPTGYLHIGG. The 'KMSKS' region signature appears at 252–256; it reads KLSKR. Lys-255 contributes to the ATP binding site.

The protein belongs to the class-I aminoacyl-tRNA synthetase family. Glutamate--tRNA ligase type 1 subfamily. As to quaternary structure, monomer.

Its subcellular location is the cytoplasm. It catalyses the reaction tRNA(Glu) + L-glutamate + ATP = L-glutamyl-tRNA(Glu) + AMP + diphosphate. Its function is as follows. Catalyzes the attachment of glutamate to tRNA(Glu) in a two-step reaction: glutamate is first activated by ATP to form Glu-AMP and then transferred to the acceptor end of tRNA(Glu). The protein is Glutamate--tRNA ligase of Ureaplasma parvum serovar 3 (strain ATCC 27815 / 27 / NCTC 11736).